A 537-amino-acid polypeptide reads, in one-letter code: 2-succinyl-5-enolpyruvyl-6-hydroxy-3-cyclohexene-1-carboxylate synthase (537 aa).

It belongs to the TPP enzyme family. MenD subfamily. As to quaternary structure, homodimer. Mg(2+) is required as a cofactor. The cofactor is Mn(2+). Thiamine diphosphate serves as cofactor.

It carries out the reaction isochorismate + 2-oxoglutarate + H(+) = 5-enolpyruvoyl-6-hydroxy-2-succinyl-cyclohex-3-ene-1-carboxylate + CO2. The protein operates within quinol/quinone metabolism; 1,4-dihydroxy-2-naphthoate biosynthesis; 1,4-dihydroxy-2-naphthoate from chorismate: step 2/7. It functions in the pathway quinol/quinone metabolism; menaquinone biosynthesis. Its function is as follows. Catalyzes the thiamine diphosphate-dependent decarboxylation of 2-oxoglutarate and the subsequent addition of the resulting succinic semialdehyde-thiamine pyrophosphate anion to isochorismate to yield 2-succinyl-5-enolpyruvyl-6-hydroxy-3-cyclohexene-1-carboxylate (SEPHCHC). In Desulfotalea psychrophila (strain LSv54 / DSM 12343), this protein is 2-succinyl-5-enolpyruvyl-6-hydroxy-3-cyclohexene-1-carboxylate synthase.